We begin with the raw amino-acid sequence, 759 residues long: Zinc finger protein 287 (759 aa).

The SCAN box domain maps to 42–124 (RRNFRNFPYP…ALVEDLTQIL (83 aa)). Positions 127-154 (EEAPQSSALPQDTPEDDPNHDPNPASQA) are disordered. The region spanning 166–234 (VTFNDVAVDI…IKEIVEGPNP (69 aa)) is the KRAB domain. 14 C2H2-type zinc fingers span residues 366 to 388 (YSCN…RENH), 394 to 416 (YECE…QRMH), 422 to 444 (YECH…QRIH), 450 to 472 (YKCE…QRTH), 478 to 500 (YKCL…QRVH), 506 to 528 (YICN…QKIH), 534 to 556 (YKCN…QRIH), 562 to 584 (YKCT…QTTH), 590 to 612 (YICN…HRTH), 618 to 640 (YKCS…QRIH), 646 to 668 (FKCN…QRVH), 674 to 696 (YKCH…RRTH), 702 to 724 (YKCS…QRIH), and 730 to 752 (YGCR…QRVH).

It belongs to the krueppel C2H2-type zinc-finger protein family. Expressed in brain and at low levels in kidney and spleen and few hematopoietic cell lines.

It localises to the nucleus. Functionally, may be involved in transcriptional regulation. The sequence is that of Zinc finger protein 287 from Mus musculus (Mouse).